We begin with the raw amino-acid sequence, 130 residues long: Small ribosomal subunit protein uS9 (130 aa).

The protein belongs to the universal ribosomal protein uS9 family.

This chain is Small ribosomal subunit protein uS9, found in Bacillus thuringiensis subsp. konkukian (strain 97-27).